The sequence spans 115 residues: NADH-ubiquinone oxidoreductase chain 3 (115 aa).

A run of 3 helical transmembrane segments spans residues 3 to 23 (VMLALLTNTLLSTLLVLIAFW), 55 to 75 (FFLVAITFLLFDLEIALLLPL), and 84 to 104 (LPTMLTMALLLISLLAASLAY).

Belongs to the complex I subunit 3 family. In terms of assembly, core subunit of respiratory chain NADH dehydrogenase (Complex I) which is composed of 45 different subunits. Interacts with TMEM186. Interacts with TMEM242.

Its subcellular location is the mitochondrion inner membrane. The catalysed reaction is a ubiquinone + NADH + 5 H(+)(in) = a ubiquinol + NAD(+) + 4 H(+)(out). Core subunit of the mitochondrial membrane respiratory chain NADH dehydrogenase (Complex I) which catalyzes electron transfer from NADH through the respiratory chain, using ubiquinone as an electron acceptor. Essential for the catalytic activity of complex I. The polypeptide is NADH-ubiquinone oxidoreductase chain 3 (Felis catus (Cat)).